We begin with the raw amino-acid sequence, 124 residues long: Acidic phospholipase A2 BA2 (124 aa).

Intrachain disulfides connect C26–C116, C28–C44, C43–C95, C49–C124, C50–C88, C57–C81, and C75–C86. Residues Y27, G29, and G31 each contribute to the Ca(2+) site. Residue H47 is part of the active site. D48 serves as a coordination point for Ca(2+). D89 is a catalytic residue.

This sequence belongs to the phospholipase A2 family. Group II subfamily. D49 sub-subfamily. The cofactor is Ca(2+). Expressed by the venom gland.

Its subcellular location is the secreted. It catalyses the reaction a 1,2-diacyl-sn-glycero-3-phosphocholine + H2O = a 1-acyl-sn-glycero-3-phosphocholine + a fatty acid + H(+). Its function is as follows. PLA2 catalyzes the calcium-dependent hydrolysis of the 2-acyl groups in 3-sn-phosphoglycerides. This chain is Acidic phospholipase A2 BA2, found in Gloydius halys (Chinese water mocassin).